The sequence spans 1438 residues: Lysophospholipase NTE1 (1438 aa).

The Cytoplasmic segment spans residues 1–25 (MDSDTSSADFHSTETLVSTPKYSYG). Residues 26–46 (VLINVILLVSWTCFRVVNWFL) traverse the membrane as a helical segment. At 47 to 64 (VTLPSILLGMLSKTFQIT) the chain is on the lumenal side. Residues 65-85 (LSLSSILMFVVAVTAICFLVV) traverse the membrane as a helical segment. Residues 86–1438 (RYKYLTRYSR…HVSLSRRNSI (1353 aa)) lie on the Cytoplasmic side of the membrane. The span at 432–450 (YETQTIPNESEDSPTIQRS) shows a compositional bias: polar residues. The segment at 432–464 (YETQTIPNESEDSPTIQRSSLRRRASHSTSLRK) is disordered. A nucleoside 3',5'-cyclic phosphate is bound by residues 590–720 (GDDS…LTID) and 707–856 (RLKR…VANR). In terms of domain architecture, PNPLA spans 1131-1295 (LVLGGGGSRG…LDNLPVSEMK (165 aa)). The GXGXXG signature appears at 1135–1140 (GGGSRG). The GXSXG motif lies at 1162–1166 (GTSIG). The Nucleophile role is filled by S1164. The active-site Proton acceptor is D1282. The DGA/G motif lies at 1282 to 1284 (DGG).

Belongs to the NTE family.

The protein resides in the endoplasmic reticulum membrane. The catalysed reaction is a 1-acyl-sn-glycero-3-phosphocholine + H2O = sn-glycerol 3-phosphocholine + a fatty acid + H(+). Its activity is regulated as follows. Inhibited by organophosphorus esters. In terms of biological role, intracellular phospholipase B that catalyzes the double deacylation of phosphatidylcholine (PC) to glycerophosphocholine (GroPCho). Plays an important role in membrane lipid homeostasis. Responsible for the rapid PC turnover in response to inositol, elevated temperatures, or when choline is present in the growth medium. The chain is Lysophospholipase NTE1 (NTE1) from Meyerozyma guilliermondii (strain ATCC 6260 / CBS 566 / DSM 6381 / JCM 1539 / NBRC 10279 / NRRL Y-324) (Yeast).